We begin with the raw amino-acid sequence, 122 residues long: Holo-[acyl-carrier-protein] synthase (122 aa).

D8 and E56 together coordinate Mg(2+).

Belongs to the P-Pant transferase superfamily. AcpS family. Requires Mg(2+) as cofactor.

The protein resides in the cytoplasm. The catalysed reaction is apo-[ACP] + CoA = holo-[ACP] + adenosine 3',5'-bisphosphate + H(+). Its function is as follows. Transfers the 4'-phosphopantetheine moiety from coenzyme A to a Ser of acyl-carrier-protein. The protein is Holo-[acyl-carrier-protein] synthase of Salinispora arenicola (strain CNS-205).